A 250-amino-acid chain; its full sequence is Probable transcriptional regulatory protein Mmc1_0479 (250 aa).

This sequence belongs to the TACO1 family.

The protein localises to the cytoplasm. The chain is Probable transcriptional regulatory protein Mmc1_0479 from Magnetococcus marinus (strain ATCC BAA-1437 / JCM 17883 / MC-1).